Here is a 113-residue protein sequence, read N- to C-terminus: Protein USP1 (113 aa).

The N-terminal stretch at 1-18 is a signal peptide; the sequence is MKITMLFAALSAASGAFA. 6 consecutive repeat copies span residues 32–37, 40–45, 46–49, 50–53, 59–65, and 69–75. The tract at residues 32–45 is 2 X 6 AA repeats; sequence IGAGVGIGIGAGVG. Residues 46–53 are 2 X 4 AA approximate tandem repeats; that stretch reads PYGYPYGA. The segment at 59 to 75 is 2 X 7 AA approximate repeats; that stretch reads LQLLPLRWLSLQWIPLR.

The protein resides in the secreted. This Puccinia graminis (Black stem rust fungus) protein is Protein USP1 (USP1).